The sequence spans 357 residues: Protein pelota homolog (357 aa).

The protein belongs to the eukaryotic release factor 1 family. Pelota subfamily. Monomer. A divalent metal cation is required as a cofactor.

It localises to the cytoplasm. Functionally, may function in recognizing stalled ribosomes, interact with stem-loop structures in stalled mRNA molecules, and effect endonucleolytic cleavage of the mRNA. May play a role in the release non-functional ribosomes and degradation of damaged mRNAs. Has endoribonuclease activity. In Thermococcus kodakarensis (strain ATCC BAA-918 / JCM 12380 / KOD1) (Pyrococcus kodakaraensis (strain KOD1)), this protein is Protein pelota homolog.